Here is a 116-residue protein sequence, read N- to C-terminus: Large ribosomal subunit protein bL19 (116 aa).

It belongs to the bacterial ribosomal protein bL19 family.

Its function is as follows. This protein is located at the 30S-50S ribosomal subunit interface and may play a role in the structure and function of the aminoacyl-tRNA binding site. The sequence is that of Large ribosomal subunit protein bL19 from Staphylococcus epidermidis (strain ATCC 35984 / DSM 28319 / BCRC 17069 / CCUG 31568 / BM 3577 / RP62A).